A 326-amino-acid chain; its full sequence is Tagatose 1,6-diphosphate aldolase 2 (326 aa).

It belongs to the aldolase LacD family.

The enzyme catalyses D-tagatofuranose 1,6-bisphosphate = D-glyceraldehyde 3-phosphate + dihydroxyacetone phosphate. It functions in the pathway carbohydrate metabolism; D-tagatose 6-phosphate degradation; D-glyceraldehyde 3-phosphate and glycerone phosphate from D-tagatose 6-phosphate: step 2/2. The chain is Tagatose 1,6-diphosphate aldolase 2 (lacD2) from Streptococcus agalactiae serotype III (strain NEM316).